The chain runs to 160 residues: Eosinophil cationic protein (160 aa).

The N-terminal stretch at 1 to 27 (MVPKLFTSQICLLLLLGLMGVEGSLHA) is a signal peptide. The segment at 28–72 (RPPQFTKAQWFAIQHINVNPPRCTIAMRVINNYQRRCKNQNTFLR) is required for nearly all of the bactericidal activities; partially involved in LPS-binding. Catalysis depends on His-42, which acts as the Proton acceptor. Disulfide bonds link Cys-50-Cys-110, Cys-64-Cys-123, Cys-82-Cys-138, and Cys-89-Cys-98. Tyr-60 bears the 3'-nitrotyrosine mark. 65 to 69 (KNQNT) provides a ligand contact to substrate. N-linked (GlcNAc...) asparagine glycans are attached at residues Asn-92 and Asn-119. Catalysis depends on His-155, which acts as the Proton donor.

It belongs to the pancreatic ribonuclease family. As to quaternary structure, interacts with bacterial lipopolysaccharide (LPS) and lipoteichoic acid (LTA). In vitro interacts with phospholipid bilayers.

Its subcellular location is the secreted. In terms of biological role, cytotoxin and helminthotoxin with low-efficiency ribonuclease activity. Possesses a wide variety of biological activities. Exhibits antibacterial activity. The protein is Eosinophil cationic protein (RNASE3) of Macaca fascicularis (Crab-eating macaque).